A 221-amino-acid chain; its full sequence is MFRPYTIEEGAYLVKLARSTVETFLKTGKIIIPESPPQRLLIDNYGVFTTIETVSGDRYELRGCIGYPEGYKNTLYATIYSAIGACCQDPRFPALRIDELPHVIFEVSILSPLTLLQDDPRKYPELIQVGRHGLVVRRGPYAGLLLPQVAVEECWDAEEFLLHVCMKAWLPGDCWLDRRTKLYIYEAQIFREKTPGGEIYERNLVAETAKCSPKTRRENEQ.

In terms of domain architecture, AMMECR1 spans glutamate 8 to glutamate 201.

This chain is Protein Pisl_1005, found in Pyrobaculum islandicum (strain DSM 4184 / JCM 9189 / GEO3).